Reading from the N-terminus, the 201-residue chain is Large ribosomal subunit protein uL4 (201 aa).

The tract at residues 44–66 is disordered; sequence KAQKTRAEVRGGGKKPWRQKGTG. Over residues 55–66 the composition is skewed to basic residues; it reads GGKKPWRQKGTG.

This sequence belongs to the universal ribosomal protein uL4 family. As to quaternary structure, part of the 50S ribosomal subunit.

One of the primary rRNA binding proteins, this protein initially binds near the 5'-end of the 23S rRNA. It is important during the early stages of 50S assembly. It makes multiple contacts with different domains of the 23S rRNA in the assembled 50S subunit and ribosome. Functionally, forms part of the polypeptide exit tunnel. The protein is Large ribosomal subunit protein uL4 of Alteromonas mediterranea (strain DSM 17117 / CIP 110805 / LMG 28347 / Deep ecotype).